The chain runs to 195 residues: Peptide methionine sulfoxide reductase MsrA 2 (195 aa).

Residue Cys18 is part of the active site.

This sequence belongs to the MsrA Met sulfoxide reductase family.

It carries out the reaction L-methionyl-[protein] + [thioredoxin]-disulfide + H2O = L-methionyl-(S)-S-oxide-[protein] + [thioredoxin]-dithiol. The catalysed reaction is [thioredoxin]-disulfide + L-methionine + H2O = L-methionine (S)-S-oxide + [thioredoxin]-dithiol. Has an important function as a repair enzyme for proteins that have been inactivated by oxidation. Catalyzes the reversible oxidation-reduction of methionine sulfoxide in proteins to methionine. This chain is Peptide methionine sulfoxide reductase MsrA 2 (msrA2), found in Mesorhizobium japonicum (strain LMG 29417 / CECT 9101 / MAFF 303099) (Mesorhizobium loti (strain MAFF 303099)).